The primary structure comprises 363 residues: 3-isopropylmalate dehydrogenase (363 aa).

Residue 78–91 (GPKWEHLPPDQQPE) participates in NAD(+) binding. Residues Arg-99, Arg-109, Arg-138, and Asp-227 each contribute to the substrate site. Asp-227, Asp-251, and Asp-255 together coordinate Mg(2+). 285–297 (GSAPDIAGKNIAN) is an NAD(+) binding site.

This sequence belongs to the isocitrate and isopropylmalate dehydrogenases family. LeuB type 1 subfamily. Homodimer. Mg(2+) is required as a cofactor. The cofactor is Mn(2+).

The protein localises to the cytoplasm. It carries out the reaction (2R,3S)-3-isopropylmalate + NAD(+) = 4-methyl-2-oxopentanoate + CO2 + NADH. It participates in amino-acid biosynthesis; L-leucine biosynthesis; L-leucine from 3-methyl-2-oxobutanoate: step 3/4. Its activity is regulated as follows. Requires K(+) ions for optimum activity. In terms of biological role, catalyzes the oxidation of 3-carboxy-2-hydroxy-4-methylpentanoate (3-isopropylmalate) to 3-carboxy-4-methyl-2-oxopentanoate. The product decarboxylates to 4-methyl-2 oxopentanoate. The polypeptide is 3-isopropylmalate dehydrogenase (Escherichia coli (strain K12)).